We begin with the raw amino-acid sequence, 87 residues long: MSLIEFLFGRKQKTATVARDRLQIIIAQERAQEGQAPDYLPTLRKELMEVLSKYVNVSLDNIRISQEKQDGMDVLELNITLPEQKKV.

Belongs to the MinE family.

Functionally, prevents the cell division inhibition by proteins MinC and MinD at internal division sites while permitting inhibition at polar sites. This ensures cell division at the proper site by restricting the formation of a division septum at the midpoint of the long axis of the cell. This Neisseria meningitidis serogroup C (strain 053442) protein is Cell division topological specificity factor.